The chain runs to 294 residues: Acetyl-coenzyme A carboxylase carboxyl transferase subunit beta (294 aa).

One can recognise a CoA carboxyltransferase N-terminal domain in the interval 30–294 (IMTKCPECKK…PEVGGEADGE (265 aa)). The Zn(2+) site is built by C34, C37, C53, and C56. The C4-type zinc finger occupies 34-56 (CPECKKIMYTKELQKNLMVCNYC).

It belongs to the AccD/PCCB family. In terms of assembly, acetyl-CoA carboxylase is a heterohexamer composed of biotin carboxyl carrier protein (AccB), biotin carboxylase (AccC) and two subunits each of ACCase subunit alpha (AccA) and ACCase subunit beta (AccD). The cofactor is Zn(2+).

It is found in the cytoplasm. It catalyses the reaction N(6)-carboxybiotinyl-L-lysyl-[protein] + acetyl-CoA = N(6)-biotinyl-L-lysyl-[protein] + malonyl-CoA. It participates in lipid metabolism; malonyl-CoA biosynthesis; malonyl-CoA from acetyl-CoA: step 1/1. In terms of biological role, component of the acetyl coenzyme A carboxylase (ACC) complex. Biotin carboxylase (BC) catalyzes the carboxylation of biotin on its carrier protein (BCCP) and then the CO(2) group is transferred by the transcarboxylase to acetyl-CoA to form malonyl-CoA. This Listeria monocytogenes serotype 4a (strain HCC23) protein is Acetyl-coenzyme A carboxylase carboxyl transferase subunit beta.